The primary structure comprises 143 residues: Large ribosomal subunit protein uL11 (143 aa).

It belongs to the universal ribosomal protein uL11 family. Part of the ribosomal stalk of the 50S ribosomal subunit. Interacts with L10 and the large rRNA to form the base of the stalk. L10 forms an elongated spine to which L12 dimers bind in a sequential fashion forming a multimeric L10(L12)X complex. In terms of processing, one or more lysine residues are methylated.

Functionally, forms part of the ribosomal stalk which helps the ribosome interact with GTP-bound translation factors. The protein is Large ribosomal subunit protein uL11 of Paraburkholderia phytofirmans (strain DSM 17436 / LMG 22146 / PsJN) (Burkholderia phytofirmans).